A 496-amino-acid polypeptide reads, in one-letter code: 2,3-bisphosphoglycerate-independent phosphoglycerate mutase (496 aa).

2 residues coordinate Mn(2+): D12 and S62. Residue S62 is the Phosphoserine intermediate of the active site. Substrate contacts are provided by residues H121, 150 to 151 (RD), R181, R187, 252 to 255 (RNDR), and K317. The Mn(2+) site is built by D384, H388, D425, H426, and H444.

It belongs to the BPG-independent phosphoglycerate mutase family. As to quaternary structure, monomer. It depends on Mn(2+) as a cofactor.

The enzyme catalyses (2R)-2-phosphoglycerate = (2R)-3-phosphoglycerate. It functions in the pathway carbohydrate degradation; glycolysis; pyruvate from D-glyceraldehyde 3-phosphate: step 3/5. Its function is as follows. Catalyzes the interconversion of 2-phosphoglycerate and 3-phosphoglycerate. The chain is 2,3-bisphosphoglycerate-independent phosphoglycerate mutase from Anaplasma phagocytophilum (strain HZ).